Consider the following 521-residue polypeptide: Tetratricopeptide repeat and J domain-containing co-chaperone DNJ1 (521 aa).

The N-terminal stretch at 1-21 is a signal peptide; sequence MHLNLAGLAVAATAFLATASA. 7 TPR repeats span residues 33–66, 67–100, 102–134, 176–209, 211–244, 315–348, and 349–382; these read VSNL…DPTN, YLSL…KPGF, GAHL…PKSA, PHLR…KPGD, SPHI…DPDS, LENL…NPDS, and FWGL…RPDQ. The region spanning 404–473 is the J domain; the sequence is DYYKVLGVEN…ELRARFDRGD (70 aa). Residues 464–474 are compositionally biased toward basic and acidic residues; the sequence is ELRARFDRGDD. Residues 464–521 are disordered; sequence ELRARFDRGDDPNSQERPNPFQGQGNPFGGGHPFMFQQGGGGGGPNIKFQFGGQPFGF. Residues 489–508 show a composition bias toward gly residues; sequence NPFGGGHPFMFQQGGGGGGP. Residues 509–521 are compositionally biased toward low complexity; sequence NIKFQFGGQPFGF.

Its subcellular location is the endoplasmic reticulum lumen. Its function is as follows. Endoplasmic reticulum co-chaperone required for the of virulence factors such as PG1, the major endopolygalacturonase produced during the infection of tomato plants. In Fusarium oxysporum f. sp. lycopersici (strain 4287 / CBS 123668 / FGSC 9935 / NRRL 34936) (Fusarium vascular wilt of tomato), this protein is Tetratricopeptide repeat and J domain-containing co-chaperone DNJ1.